The sequence spans 333 residues: Adenosine deaminase (333 aa).

Zn(2+) is bound by residues His-12 and His-14. The substrate site is built by His-14, Asp-16, and Gly-170. His-197 contributes to the Zn(2+) binding site. Glu-200 functions as the Proton donor in the catalytic mechanism. Asp-278 contributes to the Zn(2+) binding site. Asp-279 is a binding site for substrate.

The protein belongs to the metallo-dependent hydrolases superfamily. Adenosine and AMP deaminases family. Adenosine deaminase subfamily. Zn(2+) serves as cofactor.

The catalysed reaction is adenosine + H2O + H(+) = inosine + NH4(+). It catalyses the reaction 2'-deoxyadenosine + H2O + H(+) = 2'-deoxyinosine + NH4(+). In terms of biological role, catalyzes the hydrolytic deamination of adenosine and 2-deoxyadenosine. This Escherichia coli O81 (strain ED1a) protein is Adenosine deaminase.